We begin with the raw amino-acid sequence, 192 residues long: Orotate phosphoribosyltransferase (192 aa).

116-124 (EDIVTTGLS) lines the 5-phospho-alpha-D-ribose 1-diphosphate pocket. Orotate contacts are provided by Thr120 and Arg148.

This sequence belongs to the purine/pyrimidine phosphoribosyltransferase family. PyrE subfamily. Homodimer. Mg(2+) is required as a cofactor.

The catalysed reaction is orotidine 5'-phosphate + diphosphate = orotate + 5-phospho-alpha-D-ribose 1-diphosphate. It functions in the pathway pyrimidine metabolism; UMP biosynthesis via de novo pathway; UMP from orotate: step 1/2. Catalyzes the transfer of a ribosyl phosphate group from 5-phosphoribose 1-diphosphate to orotate, leading to the formation of orotidine monophosphate (OMP). This Brucella abortus (strain S19) protein is Orotate phosphoribosyltransferase.